Here is a 453-residue protein sequence, read N- to C-terminus: Ethanolamine ammonia-lyase large subunit (453 aa).

Substrate is bound by residues 160 to 162 and Asn-193; that span reads RLQ. Residues Pro-194 and Gln-246 each contribute to the adenosylcob(III)alamin site. Substrate is bound at residue Glu-287. An adenosylcob(III)alamin-binding site is contributed by Ser-295. Asp-362 contacts substrate. Met-401 serves as a coordination point for adenosylcob(III)alamin.

It belongs to the EutB family. The basic unit is a heterodimer which dimerizes to form tetramers. The heterotetramers trimerize; 6 large subunits form a core ring with 6 small subunits projecting outwards. Adenosylcob(III)alamin is required as a cofactor.

The protein localises to the bacterial microcompartment. The enzyme catalyses ethanolamine = acetaldehyde + NH4(+). The protein operates within amine and polyamine degradation; ethanolamine degradation. Functionally, catalyzes the deamination of various vicinal amino-alcohols to oxo compounds. It is spontaneously inactivated by its substrate and reactivated by EutA. May play a role in BMC assembly or maintenance. Its function is as follows. Expression of the eut operon allows this bacteria to use ethanolamine (EA) as a carbon, nitrogen and energy source. It relies on cobalamin (vitamin B12) both as a cofactor for the ethanolamine ammonia-lyase activity and to induce the operon. EA enhances bacterial survival in macrophages in a concentration-dependent manner, suggesting it is an important nutrient during infection. This Salmonella typhimurium (strain LT2 / SGSC1412 / ATCC 700720) protein is Ethanolamine ammonia-lyase large subunit.